The primary structure comprises 301 residues: Protease HtpX (301 aa).

The next 2 membrane-spanning stretches (helical) occupy residues 4 to 24 (IGLF…ILSL) and 38 to 58 (LGNL…VSLF). H147 lines the Zn(2+) pocket. Residue E148 is part of the active site. Position 151 (H151) interacts with Zn(2+). The next 2 membrane-spanning stretches (helical) occupy residues 155–175 (GDMV…MFFA) and 200–220 (FIIT…IVMW). E226 contacts Zn(2+).

The protein belongs to the peptidase M48B family. Requires Zn(2+) as cofactor.

The protein localises to the cell inner membrane. This is Protease HtpX from Acinetobacter baumannii (strain AB307-0294).